The primary structure comprises 314 residues: Ribosomal RNA small subunit methyltransferase H (314 aa).

Residues 40-42, D60, F85, D107, and Q114 contribute to the S-adenosyl-L-methionine site; that span reads GGH.

Belongs to the methyltransferase superfamily. RsmH family.

The protein localises to the cytoplasm. It catalyses the reaction cytidine(1402) in 16S rRNA + S-adenosyl-L-methionine = N(4)-methylcytidine(1402) in 16S rRNA + S-adenosyl-L-homocysteine + H(+). Its function is as follows. Specifically methylates the N4 position of cytidine in position 1402 (C1402) of 16S rRNA. The chain is Ribosomal RNA small subunit methyltransferase H from Hydrogenovibrio crunogenus (strain DSM 25203 / XCL-2) (Thiomicrospira crunogena).